A 2388-amino-acid chain; its full sequence is Spectrin beta chain, non-erythrocytic 2 (2388 aa).

Ser-2 is modified (N-acetylserine). The actin-binding stretch occupies residues 2–278 (SSTLSPTDFD…IITYVATYYH (277 aa)). Residues Ser-6 and Ser-31 each carry the phosphoserine modification. 2 Calponin-homology (CH) domains span residues 57–161 (AVQK…LRFQ) and 176–281 (KSAK…HYFS). 6 Spectrin repeats span residues 306-414 (LVEK…LALR), 427-527 (AARF…RERL), 532-639 (ELQK…RLEE), 642-744 (RLWR…QRLA), 749-849 (LYQF…RALE), and 856-954 (TMLS…KAAL). A Phosphoserine modification is found at Ser-959. Spectrin repeat units follow at residues 960–1063 (IQNY…SLGE), 1066–1169 (RLQD…GRLA), 1174–1266 (FQGF…NQEA), 1279–1379 (EQQH…ARSL), 1384–1485 (RAEL…RRLQ), 1489–1586 (EQHQ…RLEE), 1589–1692 (RAQQ…RLQE), 1696–1797 (LCQL…GQVL), 1801–1904 (YELQ…QLLL), 1910–2010 (FRFF…DWLQ), and 2017–2078 (VFGR…LTAL). A Phosphoserine modification is found at Ser-1073. A Phosphoserine modification is found at Ser-1574. Residues 2080–2096 (ERENEQKRKREEEERRK) show a composition bias toward basic and acidic residues. Disordered stretches follow at residues 2080-2112 (EREN…EGSL) and 2124-2207 (DGTQ…HVAT). Residues 2124-2163 (DGTQSKLPPSTQAPSINGVCTDTESSQPLLEQQRLEQSNV) show a composition bias toward polar residues. A phosphoserine mark is found at Ser-2169 and Ser-2199. The region spanning 2218–2328 (QEQMEGTLCR…WLRVVNAAIA (111 aa)) is the PH domain. The interval 2333-2388 (ASGEPEEPVVPSASRGLTRAMTMPPVSQPEGSIVLRSKDGREREREKRFSFFKKNK) is disordered. The residue at position 2354 (Thr-2354) is a Phosphothreonine. Ser-2359 carries the phosphoserine modification. A compositionally biased stretch (basic and acidic residues) spans 2368–2381 (RSKDGREREREKRF).

This sequence belongs to the spectrin family. In terms of tissue distribution, abundantly transcribed in the brain. Neurons are the predominant cell-type to express the gene. Found abundantly in Purkinje cells.

It is found in the cytoplasm. Its subcellular location is the cytoskeleton. The protein localises to the cell cortex. Its function is as follows. Probably plays an important role in neuronal membrane skeleton. This chain is Spectrin beta chain, non-erythrocytic 2 (Sptbn2), found in Rattus norvegicus (Rat).